Consider the following 539-residue polypeptide: Prolyl 4-hydroxylase subunit alpha-2 (539 aa).

A signal peptide spans 1–16; the sequence is MRAVLLVCLLAGLAHA. Asparagine 110 carries an N-linked (GlcNAc...) asparagine glycan. One can recognise a Fe2OG dioxygenase domain in the interval 401–509; that stretch reads TSEELQVANY…KWVSNKWIHE (109 aa). Residues histidine 419, aspartate 421, and histidine 490 each coordinate Fe cation. Residue lysine 500 participates in 2-oxoglutarate binding.

Belongs to the P4HA family. As to quaternary structure, heterotetramer of two alpha chains and two beta chains. Exist either as a phy-2(2)/pdi-2(2) tetramer or as a phy-1/phy-2/pdi-2(2) tetramer. The cofactor is Fe(2+). Requires L-ascorbate as cofactor.

Its subcellular location is the endoplasmic reticulum lumen. The enzyme catalyses L-prolyl-[collagen] + 2-oxoglutarate + O2 = trans-4-hydroxy-L-prolyl-[collagen] + succinate + CO2. In terms of biological role, catalyzes the post-translational formation of 4-hydroxyproline in -Xaa-Pro-Gly- sequences in collagens and other proteins. This chain is Prolyl 4-hydroxylase subunit alpha-2 (phy-2), found in Caenorhabditis elegans.